Reading from the N-terminus, the 545-residue chain is uncharacterized protein (545 aa).

Residues 1–10 show a composition bias toward basic residues; sequence MSRYRFRKAR. The interval 1–25 is disordered; sequence MSRYRFRKARSNWPMGQNDSRWEPP. 2 WD repeats span residues 417–456 and 460–501; these read ACNTTFVRVLEKTRPECVVTEGFDSIIRIWDFRWPKNPMM and GHSN…MLCS.

This is an uncharacterized protein from Caenorhabditis elegans.